The following is a 118-amino-acid chain: Large ribosomal subunit protein bL20 (118 aa).

The protein belongs to the bacterial ribosomal protein bL20 family.

Functionally, binds directly to 23S ribosomal RNA and is necessary for the in vitro assembly process of the 50S ribosomal subunit. It is not involved in the protein synthesizing functions of that subunit. This is Large ribosomal subunit protein bL20 from Lachnoclostridium phytofermentans (strain ATCC 700394 / DSM 18823 / ISDg) (Clostridium phytofermentans).